Reading from the N-terminus, the 233-residue chain is Tapetum-specific methyltransferase 1 (233 aa).

Substrate is bound at residue Lys8. S-adenosyl-L-methionine contacts are provided by residues Val52, Glu74, Gly76–Val77, Ser82, Asp100, and Ala129. Asp150 is a substrate binding site. Asp150 provides a ligand contact to a divalent metal cation. Asp152 is an S-adenosyl-L-methionine binding site. 2 residues coordinate a divalent metal cation: Asp176 and Asn177.

Belongs to the class I-like SAM-binding methyltransferase superfamily. Cation-dependent O-methyltransferase family. CCoAMT subfamily. It depends on a divalent metal cation as a cofactor. In terms of tissue distribution, expressed in inflorescences and flower buds. Not detected in roots, leaves or stems. Located exclusively in the tapetum of developing stamen.

The protein operates within aromatic compound metabolism; phenylpropanoid biosynthesis. In terms of biological role, methyltransferase involved in phenylpropanoid polyamine conjugate biosynthesis. In vivo, methylates only one of the 5-hydroxyferuloyl moieties of N1,N5,N10-tri-(hydroxyferuloyl)-spermidine, while is able in vitro to convert all three 5-hydroxyferuloyl residues to the corresponding sinapoyl moieties and to methylate caffeoyl CoA and tricaffeoyl spermidine. In Arabidopsis thaliana (Mouse-ear cress), this protein is Tapetum-specific methyltransferase 1 (TSM1).